Here is a 59-residue protein sequence, read N- to C-terminus: Lantipeptide Flvbeta.f (59 aa).

A propeptide spans 1–27 (MEKMNNIAGITPENELDEMFDDSVVGA) (cleaved by FlvT). 2 positions are modified to 2,3-didehydrobutyrine; by FlvM2: T31 and T32. Cross-links (beta-methyllanthionine (Thr-Cys); by FlvM2) lie at residues 41–47 (TKNPQIC) and 53–56 (TVKC).

In terms of processing, contains DL-beta-methyllanthionine, when coepressed in E.coli with the flavecin synthetase FlvM2.

It localises to the secreted. In terms of biological role, lanthionine-containing peptide that does probably not show antibacterial activity, since its analog [+7]Flvbeta.f does not show antibacterial activity against M.luteus. Also does not show antibiotic activity when tested with [Del2]Flvalpha.a, an analog of Flvalpha.a, which is encoded by the same operon than Flvbeta.f. The bactericidal activity of lantibiotics is based on depolarization of energized bacterial cytoplasmic membranes, initiated by the formation of aqueous transmembrane pores. This chain is Lantipeptide Flvbeta.f, found in Ruminococcus flavefaciens.